Reading from the N-terminus, the 467-residue chain is MPSSAQNVGIKALEIYFPSRYVPQTELETFLGASAGKYTIGLGQQNMSFCDDREDLYSLALTAVSSLLRKYAIDPNTIGRLEVGTETLLDKAKSCKTVLMQLFGDNTDIEGVDTYNACYGGTNALFNAVNWIESSSWDGRDAIVVAGDIALYETPAARPTGGAGCVAMLIGPDAPLVLEPVRGSCMKHVYDFYKAYFKSEYPLVDGQFSNTCYLGALDACYQRYQAKQRARQAAKTNGTAISNGHQGSFLDTFDYFAFHAPNCKLVAKGYGRLLFNDFKLESGSFDEVPAQVREADFAASLTDKALEKLCVSLTKERFVQRVEPSLTAPTNCGNMYTASVYAGLISLISNVPSDRLQDKRIGMFSYGSGLASTLFSFRVKGDTTEMARKIGLQDRLSARTAVSPEFYDQMCKLREKAYQQRNYTPEGSVESLAPGTYFLVHVDDAYRRKYDMKPYLSMCEDRHEQAV.

(3S)-3-hydroxy-3-methylglutaryl-CoA is bound at residue alanine 35. The active-site Proton donor/acceptor is the glutamate 86. (3S)-3-hydroxy-3-methylglutaryl-CoA contacts are provided by cysteine 118, threonine 160, serine 209, histidine 259, lysine 268, asparagine 334, and serine 368. Cysteine 118 functions as the Acyl-thioester intermediate in the catalytic mechanism. Residue histidine 259 is the Proton donor/acceptor of the active site.

The protein belongs to the thiolase-like superfamily. HMG-CoA synthase family.

It carries out the reaction acetoacetyl-CoA + acetyl-CoA + H2O = (3S)-3-hydroxy-3-methylglutaryl-CoA + CoA + H(+). It functions in the pathway metabolic intermediate biosynthesis; (R)-mevalonate biosynthesis; (R)-mevalonate from acetyl-CoA: step 2/3. Its function is as follows. Hydroxymethylglutaryl-CoA synthase; part of the first module of ergosterol biosynthesis pathway that includes the early steps of the pathway, conserved across all eukaryotes, and which results in the formation of mevalonate from acetyl-coenzyme A (acetyl-CoA). Erg13A and erg13B condense acetyl-CoA with acetoacetyl-CoA to form hydroxymethylglutaryl-CoA (HMG-CoA). The first module starts with the action of the cytosolic acetyl-CoA acetyltransferase erg10B that catalyzes the formation of acetoacetyl-CoA. The hydroxymethylglutaryl-CoA synthases erg13A and erg13B then condense acetyl-CoA with acetoacetyl-CoA to form HMG-CoA. The rate-limiting step of the early module is the reduction to mevalonate by the 3-hydroxy-3-methylglutaryl-coenzyme A (HMG-CoA) reductases hmg1 and hmg2. Mevalonate is also a precursor for the extracellular siderophore triacetylfusarinine C (TAFC). The polypeptide is Hydroxymethylglutaryl-CoA synthase erg13A (Aspergillus fumigatus (strain ATCC MYA-4609 / CBS 101355 / FGSC A1100 / Af293) (Neosartorya fumigata)).